Here is a 528-residue protein sequence, read N- to C-terminus: OLD nuclease (528 aa).

The ATPase domain N-terminus stretch occupies residues 1–153 (MLKRLQVKNF…LAQHLPSIRG (153 aa)). Residue 31–35 (GAGKT) participates in ATP binding. The dimerization domain stretch occupies residues 154–245 (SILGRLLQPV…RESDLTLPGD (92 aa)). The tract at residues 246-369 (ELGLGIQSAI…FDTARNEVLF (124 aa)) is ATPase domain C-terminus. The toprim domain stretch occupies residues 370 to 528 (AKRALLVEGY…IRQVTRPMEE (159 aa)). Glutamate 377, aspartate 381, aspartate 431, and aspartate 433 together coordinate a divalent metal cation. A disordered region spans residues 440 to 461 (RADEETRRKQEQENKAEQEKNQ). 2 residues coordinate a divalent metal cation: serine 478 and glutamate 480. Catalysis depends on arginine 487, which acts as the Stabilizes transition state or protonates leaving group.

It belongs to the class 1 OLD nuclease family. Homodimer. It depends on Mg(2+) as a cofactor. Mn(2+) serves as cofactor. Requires Ca(2+) as cofactor.

It carries out the reaction Exonucleolytic cleavage in the 5'- to 3'-direction to yield nucleoside 5'-phosphates.. Functionally, an exodeoxyribonuclease that degrades linear or supercoiled dsDNA from 5'-3'. Nicks and linearizes circular DNA. Activity is not stimulated by ATP or AMP-PNP, although it has DNA-stimulated ATPase activity. The protein is OLD nuclease of Thermus scotoductus (strain ATCC 700910 / SA-01).